Consider the following 418-residue polypeptide: Histidine--tRNA ligase (418 aa).

Belongs to the class-II aminoacyl-tRNA synthetase family.

It is found in the cytoplasm. It carries out the reaction tRNA(His) + L-histidine + ATP = L-histidyl-tRNA(His) + AMP + diphosphate + H(+). The chain is Histidine--tRNA ligase from Methanococcus aeolicus (strain ATCC BAA-1280 / DSM 17508 / OCM 812 / Nankai-3).